Here is a 977-residue protein sequence, read N- to C-terminus: Receptor protein-tyrosine kinase CEPR2 (977 aa).

An N-terminal signal peptide occupies residues 1–31 (MSRRPDLLRGSVVATVAATFLLFIFPPNVES). Residues 32–620 (TVEKQALFRF…NVKRNSSLDG (589 aa)) lie on the Extracellular side of the membrane. The N-linked (GlcNAc...) asparagine glycan is linked to Asn85. LRR repeat units follow at residues 97-121 (LTKL…IVNC), 122-146 (KNLK…PLKS), 148-167 (EILD…WIGN), 168-192 (MNQL…SIGG), 193-217 (LKKL…IFDL), 219-241 (ALDT…ISRL), 242-265 (VNLT…IKNL), 266-288 (TRLR…ELGV), 290-312 (KELR…GFGD), 313-338 (LSHL…GRFS), 340-361 (LDTV…LCQN), 363-385 (KLQF…YGEC), 386-409 (KSLL…FWSL), 411-433 (LAKM…IGLS), 434-457 (TELS…LGRL), 458-481 (TNIE…VGDL), 482-504 (KELS…ELKN), 506-529 (VKLV…LSQI), 530-553 (ASLN…LVKL), and 555-576 (LSFI…LLAV). A glycan (N-linked (GlcNAc...) asparagine) is linked at Asn128. Asn205 carries N-linked (GlcNAc...) asparagine glycosylation. 3 N-linked (GlcNAc...) asparagine glycosylation sites follow: Asn243, Asn251, and Asn264. Residues Asn301 and Asn325 are each glycosylated (N-linked (GlcNAc...) asparagine). N-linked (GlcNAc...) asparagine glycosylation is found at Asn469 and Asn491. Residue Asn615 is glycosylated (N-linked (GlcNAc...) asparagine). Residues 621–641 (TLLFLALAIVVVVLVSGLFAL) form a helical membrane-spanning segment. Topologically, residues 642 to 977 (RYRVVKIREL…SQDTTGKITV (336 aa)) are cytoplasmic. Residues 683 to 965 (LDEDHVIGSG…RKLDDADPCV (283 aa)) enclose the Protein kinase domain. ATP contacts are provided by residues 689-697 (IGSGSAGKV) and Lys712. Tyr801 is subject to Phosphotyrosine. Residue Asp814 is the Proton acceptor of the active site. Ser846 carries the post-translational modification Phosphoserine. Phosphotyrosine occurs at positions 854 and 861.

This sequence belongs to the protein kinase superfamily. Ser/Thr protein kinase family. In terms of assembly, interacts with the root-derived peptide CEP1. Binds to the ammonium transporter AMT1-1. As to expression, expressed in mature leaves, primary roots, and the root tips of both primary and lateral roots.

It is found in the cell membrane. It catalyses the reaction L-tyrosyl-[protein] + ATP = O-phospho-L-tyrosyl-[protein] + ADP + H(+). Its function is as follows. Receptor kinase involved in the perception of C-terminally encoded plant signaling peptide (CEP) and subsequent regulation of root and shoot development. Together with CEPR1, mediates systemic nitrogen (N)-demand signaling upon the perception of root-derived peptides (e.g. CEP1) via the up-regulation of genes involved in N uptake and assimilation pathways. The sequence is that of Receptor protein-tyrosine kinase CEPR2 from Arabidopsis thaliana (Mouse-ear cress).